A 478-amino-acid chain; its full sequence is Lipoprotein lipase (478 aa).

Residues 1 to 28 (MESKALLLLALSVCLQSLTVSRGGLVAA) form the signal peptide. The interval 35 to 56 (KDFRDIESKFALRTPEDTAEDT) is interaction with GPIHBP1. Cys57 and Cys70 form a disulfide bridge. The N-linked (GlcNAc...) asparagine glycan is linked to Asn73. Residue Tyr124 is modified to 3'-nitrotyrosine. Ser162 functions as the Nucleophile in the catalytic mechanism. Asp186 acts as the Charge relay system in catalysis. Tyr194 is modified (3'-nitrotyrosine). Ca(2+)-binding residues include Ala197, Arg200, Ser202, and Asp205. Cys246 and Cys269 are joined by a disulfide. Positions 246–269 (CNIGEALRVIAERGLGDVDQLVKC) are essential for determining substrate specificity. The Charge relay system role is filled by His271. Asn287 carries N-linked (GlcNAc...) asparagine glycosylation. 2 disulfide bridges follow: Cys294–Cys313 and Cys305–Cys308. One can recognise a PLAT domain in the interval 344–467 (FHYQVKIHFS…KGKSPVIFVK (124 aa)). Tyr346 carries the 3'-nitrotyrosine modification. The N-linked (GlcNAc...) asparagine glycan is linked to Asn389. Residues 420–424 (WSNWW) form an important for interaction with lipoprotein particles region. The interval 433–437 (KIRVK) is important for heparin binding. The tract at residues 446 to 470 (IFCSREKMSYLQKGKSPVIFVKCHD) is interaction with GPIHBP1. Cys448 and Cys468 are oxidised to a cystine.

It belongs to the AB hydrolase superfamily. Lipase family. In terms of assembly, homodimer. Interacts with GPIHBP1 with 1:1 stoichiometry. Interacts with APOC2; the interaction activates LPL activity in the presence of lipids. Interaction with heparan sulfate proteoglycans is required to protect LPL against loss of activity. Associates with lipoprotein particles in blood plasma. Interacts with LMF1 and SEL1L; interaction with SEL1L is required to prevent aggregation of newly synthesized LPL in the endoplasmic reticulum (ER), and for normal export of LPL from the ER to the extracellular space. Interacts with SORL1; SORL1 acts as a sorting receptor, promoting LPL localization to endosomes and later to lysosomes, leading to degradation of newly synthesized LPL. Tyrosine nitration after lipopolysaccharide (LPS) challenge down-regulates the lipase activity. As to expression, detected in milk (at protein level).

The protein localises to the cell membrane. Its subcellular location is the secreted. The protein resides in the extracellular space. It is found in the extracellular matrix. It catalyses the reaction a triacylglycerol + H2O = a diacylglycerol + a fatty acid + H(+). It carries out the reaction a 1,2-diacyl-sn-glycero-3-phosphocholine + H2O = a 2-acyl-sn-glycero-3-phosphocholine + a fatty acid + H(+). The catalysed reaction is 1,2,3-tri-(9Z-octadecenoyl)-glycerol + H2O = di-(9Z)-octadecenoylglycerol + (9Z)-octadecenoate + H(+). The enzyme catalyses 1,2-di-(9Z-octadecenoyl)-sn-glycero-3-phosphocholine + H2O = (9Z-octadecenoyl)-sn-glycero-3-phosphocholine + (9Z)-octadecenoate + H(+). It catalyses the reaction 1,2,3-tributanoylglycerol + H2O = dibutanoylglycerol + butanoate + H(+). It carries out the reaction 1,2-dihexadecanoyl-sn-glycero-3-phosphocholine + H2O = hexadecanoyl-sn-glycero-3-phosphocholine + hexadecanoate + H(+). With respect to regulation, the apolipoprotein APOC2 acts as a coactivator of LPL activity. Ca(2+) binding promotes protein stability and formation of the active homodimer. Interaction with GPIHBP1 protects LPL against inactivation by ANGPTL4. In terms of biological role, key enzyme in triglyceride metabolism. Catalyzes the hydrolysis of triglycerides from circulating chylomicrons and very low density lipoproteins (VLDL), and thereby plays an important role in lipid clearance from the blood stream, lipid utilization and storage. Although it has both phospholipase and triglyceride lipase activities it is primarily a triglyceride lipase with low but detectable phospholipase activity. Mediates margination of triglyceride-rich lipoprotein particles in capillaries. Recruited to its site of action on the luminal surface of vascular endothelium by binding to GPIHBP1 and cell surface heparan sulfate proteoglycans. This chain is Lipoprotein lipase (LPL), found in Bos taurus (Bovine).